Here is a 101-residue protein sequence, read N- to C-terminus: UPF0213 protein VC0395_0675/VC395_A0575 (101 aa).

Residues 9–85 (SPWFVYLVRC…KALSKSQKEA (77 aa)) enclose the GIY-YIG domain.

It belongs to the UPF0213 family.

This is UPF0213 protein VC0395_0675/VC395_A0575 from Vibrio cholerae serotype O1 (strain ATCC 39541 / Classical Ogawa 395 / O395).